The following is a 602-amino-acid chain: Elongation factor 4 (602 aa).

The tr-type G domain occupies 8-189 (KNIRNFSIIA…KIITTIPAPS (182 aa)). GTP is bound by residues 20–25 (DHGKST) and 136–139 (NKID).

Belongs to the TRAFAC class translation factor GTPase superfamily. Classic translation factor GTPase family. LepA subfamily.

The protein resides in the cell inner membrane. The enzyme catalyses GTP + H2O = GDP + phosphate + H(+). Its function is as follows. Required for accurate and efficient protein synthesis under certain stress conditions. May act as a fidelity factor of the translation reaction, by catalyzing a one-codon backward translocation of tRNAs on improperly translocated ribosomes. Back-translocation proceeds from a post-translocation (POST) complex to a pre-translocation (PRE) complex, thus giving elongation factor G a second chance to translocate the tRNAs correctly. Binds to ribosomes in a GTP-dependent manner. This chain is Elongation factor 4, found in Helicobacter pylori (strain ATCC 700392 / 26695) (Campylobacter pylori).